The chain runs to 435 residues: 5-methylthioadenosine/S-adenosylhomocysteine deaminase (435 aa).

The Zn(2+) site is built by histidine 65 and histidine 67. 3 residues coordinate substrate: glutamate 94, arginine 150, and histidine 189. Residue histidine 216 coordinates Zn(2+). Residues glutamate 219 and aspartate 304 each coordinate substrate. Residue aspartate 304 coordinates Zn(2+).

Belongs to the metallo-dependent hydrolases superfamily. MTA/SAH deaminase family. Zn(2+) serves as cofactor.

It catalyses the reaction S-adenosyl-L-homocysteine + H2O + H(+) = S-inosyl-L-homocysteine + NH4(+). The catalysed reaction is S-methyl-5'-thioadenosine + H2O + H(+) = S-methyl-5'-thioinosine + NH4(+). In terms of biological role, catalyzes the deamination of 5-methylthioadenosine and S-adenosyl-L-homocysteine into 5-methylthioinosine and S-inosyl-L-homocysteine, respectively. Is also able to deaminate adenosine. This Bacillus cereus (strain 03BB102) protein is 5-methylthioadenosine/S-adenosylhomocysteine deaminase.